A 398-amino-acid chain; its full sequence is 1-deoxy-D-xylulose 5-phosphate reductoisomerase (398 aa).

Residues Thr-11, Gly-12, Ser-13, Ile-14, Arg-38, Asn-39, and Asn-125 each contribute to the NADPH site. Residue Lys-126 coordinates 1-deoxy-D-xylulose 5-phosphate. Glu-127 lines the NADPH pocket. Asp-151 is a binding site for Mn(2+). 1-deoxy-D-xylulose 5-phosphate is bound by residues Ser-152, Glu-153, Ser-179, and His-202. Glu-153 is a Mn(2+) binding site. Gly-208 serves as a coordination point for NADPH. 4 residues coordinate 1-deoxy-D-xylulose 5-phosphate: Ser-215, Asn-220, Lys-221, and Glu-224. Glu-224 contributes to the Mn(2+) binding site.

It belongs to the DXR family. The cofactor is Mg(2+). Mn(2+) is required as a cofactor.

It catalyses the reaction 2-C-methyl-D-erythritol 4-phosphate + NADP(+) = 1-deoxy-D-xylulose 5-phosphate + NADPH + H(+). It participates in isoprenoid biosynthesis; isopentenyl diphosphate biosynthesis via DXP pathway; isopentenyl diphosphate from 1-deoxy-D-xylulose 5-phosphate: step 1/6. Its function is as follows. Catalyzes the NADPH-dependent rearrangement and reduction of 1-deoxy-D-xylulose-5-phosphate (DXP) to 2-C-methyl-D-erythritol 4-phosphate (MEP). The polypeptide is 1-deoxy-D-xylulose 5-phosphate reductoisomerase (Burkholderia pseudomallei (strain 1106a)).